The sequence spans 281 residues: Streptomycin biosynthesis protein StrF (281 aa).

The protein operates within antibiotic biosynthesis; streptomycin biosynthesis. Its function is as follows. May be involved in the formation of N-methyl-L-glucosamine. The chain is Streptomycin biosynthesis protein StrF (strF) from Streptomyces griseus.